We begin with the raw amino-acid sequence, 231 residues long: Transmembrane gamma-carboxyglutamic acid protein 3 (231 aa).

The propeptide occupies 1 to 19 (MAVFLEAKNAHAVLKRFPR). Residues 20–65 (ANEFLEELRQGTIERECMEEICSYEEVKEVFENKEKTMEFWKGYPN) enclose the Gla domain. Residues 20–78 (ANEFLEELRQGTIERECMEEICSYEEVKEVFENKEKTMEFWKGYPNAVYSVRDPSQSSD) lie on the Extracellular side of the membrane. A 4-carboxyglutamate mark is found at E22, E25, E26, E33, E35, E38, E39, E44, E45, E48, E51, E54, and E58. C36 and C41 form a disulfide bridge. A helical membrane pass occupies residues 79-101 (AMYVVVPLLGVVLLIVIALFIIW). Residues 102 to 231 (RCQLQKATRH…IVAASPSADK (130 aa)) lie on the Cytoplasmic side of the membrane. Disordered stretches follow at residues 140–165 (HSQGESSGHREAGNNPQIVMGPSRGG) and 184–231 (RLSS…SADK). The span at 201-212 (QEGSSEEASVSY) shows a compositional bias: polar residues.

In terms of processing, gla residues are produced after subsequent post-translational modifications of glutamate by a vitamin K-dependent gamma-carboxylase.

It is found in the membrane. This is Transmembrane gamma-carboxyglutamic acid protein 3 (Prrg3) from Mus musculus (Mouse).